A 451-amino-acid chain; its full sequence is Tubulin alpha-1B chain (451 aa).

An MREC motif motif is present at residues 1 to 4; sequence MREC. 4 residues coordinate GTP: Gly10, Gln11, Ala12, and Gln15. Lys40 carries the post-translational modification N6,N6,N6-trimethyllysine; alternate. The residue at position 40 (Lys40) is an N6-acetyllysine; alternate. Position 48 is a phosphoserine (Ser48). GTP contacts are provided by Glu71, Ala99, Ser140, Gly143, Gly144, Thr145, Gly146, Thr179, Glu183, Asn206, Tyr224, and Asn228. Glu71 serves as a coordination point for Mg(2+). Residue Ser232 is modified to Phosphoserine. Leu252 contributes to the GTP binding site. The active site involves Glu254. At Tyr282 the chain carries 3'-nitrotyrosine. Residue Lys326 forms a Glycyl lysine isopeptide (Lys-Gly) (interchain with G-Cter in ubiquitin) linkage. Arg339 is subject to Omega-N-methylarginine. A Glycyl lysine isopeptide (Lys-Gly) (interchain with G-Cter in ubiquitin) cross-link involves residue Lys370. Positions 432 to 451 are disordered; it reads YEEVGVDSVEGEGEEEGEEY. The residue at position 439 (Ser439) is a Phosphoserine. 5-glutamyl polyglutamate occurs at positions 443 and 445. Tyr451 carries the post-translational modification 3'-nitrotyrosine.

It belongs to the tubulin family. Heterodimer of alpha- and beta-tubulin. A typical microtubule is a hollow water-filled tube with an outer diameter of 25 nm and an inner diameter of 15 nM. Alpha-beta heterodimers associate head-to-tail to form protofilaments running lengthwise along the microtubule wall with the beta-tubulin subunit facing the microtubule plus end conferring a structural polarity. Microtubules usually have 13 protofilaments but different protofilament numbers can be found in some organisms and specialized cells. Interacts with gamma-tubulin; the interaction allows microtubules to nucleate from the gamma-tubulin ring complex (gTuRC). Nascent microtubule interacts (via alpha-tubulin MREC motif) with TTC5/STRAP; this interaction may result in tubulin mRNA-targeted degradation. Component of sperm flagellar doublet microtubules. Mg(2+) serves as cofactor. In terms of processing, some glutamate residues at the C-terminus are polyglutamylated, resulting in polyglutamate chains on the gamma-carboxyl group. Polyglutamylation plays a key role in microtubule severing by spastin (SPAST). SPAST preferentially recognizes and acts on microtubules decorated with short polyglutamate tails: severing activity by SPAST increases as the number of glutamates per tubulin rises from one to eight, but decreases beyond this glutamylation threshold. Glutamylation is also involved in cilia motility. Post-translationally, some glutamate residues at the C-terminus are monoglycylated but not polyglycylated due to the absence of functional TTLL10 in human. Monoglycylation is mainly limited to tubulin incorporated into cilia and flagella axonemes, which is required for their stability and maintenance. Flagella glycylation controls sperm motility. Both polyglutamylation and monoglycylation can coexist on the same protein on adjacent residues, and lowering glycylation levels increases polyglutamylation, and reciprocally. Acetylation of alpha chains at Lys-40 is located inside the microtubule lumen. This modification has been correlated with increased microtubule stability, intracellular transport and ciliary assembly. In terms of processing, methylation of alpha chains at Lys-40 is found in mitotic microtubules and is required for normal mitosis and cytokinesis contributing to genomic stability. Post-translationally, nitration of Tyr-451 is irreversible and interferes with normal dynein intracellular distribution. Undergoes a tyrosination/detyrosination cycle, the cyclic removal and re-addition of a C-terminal tyrosine residue by the enzymes tubulin tyrosine carboxypeptidase (MATCAP1/KIAA0895L, VASH1 or VASH2) and tubulin tyrosine ligase (TTL), respectively. In terms of processing, tyrosination promotes microtubule interaction with CAP-Gly domain-containing proteins such as CLIP1, CLIP2 and DCTN1. Tyrosination regulates the initiation of dynein-dynactin motility via interaction with DCTN1, which brings the dynein-dynactin complex into contact with microtubules. In neurons, tyrosinated tubulins mediate the initiation of retrograde vesicle transport. Post-translationally, detyrosination is involved in metaphase plate congression by guiding chromosomes during mitosis: detyrosination promotes interaction with CENPE, promoting pole-proximal transport of chromosomes toward the equator. Detyrosination increases microtubules-dependent mechanotransduction in dystrophic cardiac and skeletal muscle. In cardiomyocytes, detyrosinated microtubules are required to resist to contractile compression during contraction: detyrosination promotes association with desmin (DES) at force-generating sarcomeres, leading to buckled microtubules and mechanical resistance to contraction.

It is found in the cytoplasm. It localises to the cytoskeleton. It catalyses the reaction GTP + H2O = GDP + phosphate + H(+). Functionally, tubulin is the major constituent of microtubules, protein filaments consisting of alpha- and beta-tubulin heterodimers. Microtubules grow by the addition of GTP-tubulin dimers to the microtubule end, where a stabilizing cap forms. Below the cap, tubulin dimers are in GDP-bound state, owing to GTPase activity of alpha-tubulin. The sequence is that of Tubulin alpha-1B chain (TUBA1B) from Homo sapiens (Human).